The primary structure comprises 252 residues: 3-dehydroquinate dehydratase (252 aa).

3-dehydroquinate contacts are provided by residues Ser21, 46 to 48, and Arg82; that span reads EWR. His143 (proton donor/acceptor) is an active-site residue. Lys170 functions as the Schiff-base intermediate with substrate in the catalytic mechanism. Residues Arg213, Ser232, and Gln236 each coordinate 3-dehydroquinate.

It belongs to the type-I 3-dehydroquinase family. Homodimer.

The catalysed reaction is 3-dehydroquinate = 3-dehydroshikimate + H2O. Its pathway is metabolic intermediate biosynthesis; chorismate biosynthesis; chorismate from D-erythrose 4-phosphate and phosphoenolpyruvate: step 3/7. With respect to regulation, inhibited by (2R)-2-methyl-3-dehydroquinic acid. In terms of biological role, involved in the third step of the chorismate pathway, which leads to the biosynthesis of aromatic amino acids. Catalyzes the cis-dehydration of 3-dehydroquinate (DHQ) and introduces the first double bond of the aromatic ring to yield 3-dehydroshikimate. The reaction involves the formation of an imine intermediate between the keto group of 3-dehydroquinate and the epsilon-amino group of a Lys-170 at the active site. The protein is 3-dehydroquinate dehydratase of Salmonella typhimurium (strain LT2 / SGSC1412 / ATCC 700720).